The chain runs to 353 residues: Protein RecA (353 aa).

Residue 64–71 (GPESSGKT) coordinates ATP. The interval 331 to 353 (LEEASAQKEEVPVEDKLFDDELE) is disordered. Residues 335 to 346 (SAQKEEVPVEDK) show a composition bias toward basic and acidic residues.

This sequence belongs to the RecA family.

Its subcellular location is the cytoplasm. Can catalyze the hydrolysis of ATP in the presence of single-stranded DNA, the ATP-dependent uptake of single-stranded DNA by duplex DNA, and the ATP-dependent hybridization of homologous single-stranded DNAs. It interacts with LexA causing its activation and leading to its autocatalytic cleavage. The polypeptide is Protein RecA (Macrococcus caseolyticus (strain JCSC5402) (Macrococcoides caseolyticum)).